The sequence spans 101 residues: Small ribosomal subunit protein uS14 (101 aa).

The tract at residues 1–25 is disordered; sequence MAKVSAIQKNKSRQKKSQRLHNKRS. The span at 10–25 shows a compositional bias: basic residues; the sequence is NKSRQKKSQRLHNKRS.

It belongs to the universal ribosomal protein uS14 family. In terms of assembly, part of the 30S ribosomal subunit. Contacts proteins S3 and S10.

Binds 16S rRNA, required for the assembly of 30S particles and may also be responsible for determining the conformation of the 16S rRNA at the A site. The protein is Small ribosomal subunit protein uS14 of Rickettsia typhi (strain ATCC VR-144 / Wilmington).